The primary structure comprises 225 residues: tRNA (guanine-N(7)-)-methyltransferase (225 aa).

S-adenosyl-L-methionine contacts are provided by Glu56, Glu81, Asp108, and Asp131. The active site involves Asp131. Substrate is bound by residues Lys135, Asp167, and 204–207; that span reads TKFE.

The protein belongs to the class I-like SAM-binding methyltransferase superfamily. TrmB family.

It carries out the reaction guanosine(46) in tRNA + S-adenosyl-L-methionine = N(7)-methylguanosine(46) in tRNA + S-adenosyl-L-homocysteine. It functions in the pathway tRNA modification; N(7)-methylguanine-tRNA biosynthesis. In terms of biological role, catalyzes the formation of N(7)-methylguanine at position 46 (m7G46) in tRNA. The protein is tRNA (guanine-N(7)-)-methyltransferase of Legionella pneumophila (strain Corby).